The chain runs to 87 residues: Small ribosomal subunit protein bS20 (87 aa).

Positions 1–25 (MANTAQARKRARQSVQRNKHNSSLR) are disordered. The segment covering 7–22 (ARKRARQSVQRNKHNS) has biased composition (basic residues).

Belongs to the bacterial ribosomal protein bS20 family.

Its function is as follows. Binds directly to 16S ribosomal RNA. In Bordetella bronchiseptica (strain ATCC BAA-588 / NCTC 13252 / RB50) (Alcaligenes bronchisepticus), this protein is Small ribosomal subunit protein bS20.